The chain runs to 480 residues: UDP-glycosyltransferase 708D1 (480 aa).

His20 (proton acceptor) is an active-site residue. His20 contacts an anthocyanidin. Catalysis depends on Asp118, which acts as the Charge relay. Residue Thr141 coordinates UDP-alpha-D-glucose. Residues Asn291–Arg292 form a UDP region. UDP-alpha-D-glucose is bound by residues Val354, Gln356, His371, Trp374, Asn375, Ser376, Glu379, Asp395, and Gln396.

This sequence belongs to the UDP-glycosyltransferase family.

The enzyme catalyses a 3'-hydro-2'-hydroxy-beta-oxodihydrochalcone + UDP-alpha-D-glucose = a 3'-(beta-D-glucopyranosyl)-2'-hydroxy-beta-oxodihydrochalcone + UDP + H(+). In terms of biological role, UDP-glucose-dependent glucosyltransferase catalyzing the c-glucosylation of the A ring of 2-hydroxynaringenin. Also active toward phloretin, but not toward naringenin and apigenin. The chain is UDP-glycosyltransferase 708D1 from Glycine max (Soybean).